The following is a 196-amino-acid chain: GTP cyclohydrolase 1 (196 aa).

The Zn(2+) site is built by cysteine 86, histidine 89, and cysteine 158.

This sequence belongs to the GTP cyclohydrolase I family. In terms of assembly, homomer.

It catalyses the reaction GTP + H2O = 7,8-dihydroneopterin 3'-triphosphate + formate + H(+). It participates in cofactor biosynthesis; 7,8-dihydroneopterin triphosphate biosynthesis; 7,8-dihydroneopterin triphosphate from GTP: step 1/1. The protein is GTP cyclohydrolase 1 of Clostridium botulinum (strain Kyoto / Type A2).